The sequence spans 150 residues: UPF0756 membrane protein PMI1560 (150 aa).

4 helical membrane-spanning segments follow: residues 16-36 (GLGI…LLVI), 51-71 (YGMT…IATG), 82-102 (FLNW…WLGA), and 123-143 (VIGV…AGIL).

This sequence belongs to the UPF0756 family.

The protein resides in the cell membrane. This is UPF0756 membrane protein PMI1560 from Proteus mirabilis (strain HI4320).